We begin with the raw amino-acid sequence, 715 residues long: MKPNYKDIDIKSAGFVAKDATRWAEEKGIVADWRTPEQIMVKPLYTKDDLEGMEHLDYVSGLPPFLRGPYSGMYPMRPWTIRQYAGFSTAEESNAFYRRNLASGQKGLSVAFDLATHRGYDADHSRVVGDVGKAGVSICSLEDMKVLFDGIPLSKMSVSMTMNGAVLPILAFYINAGLEQGAKLEEMAGTIQNDILKEFMVRNTYIYPPEFSMRIIADIFEYTSQNMPKFNSISISGYHMQEAGATADIEMAYTLADGMQYLKAGIDAGIDVDAFAPRLSFFWAIGVNHFMEIAKMRAARLLWAKIVKSFGAKNPKSLALRTHSQTSGWSLTEQDPFNNVGRTCIEAMAAALGHTQSLHTNALDEAIALPTDFSARIARNTQIYIQEETLVCKEIDPWGGSYYVESLTNELVHKAWTLIKEVQEMGGMAKAIETGLPKLRIEEAAARTQARIDSHQQVIVGVNKYRLPKEDPIDILEIDNTAVRKQQIERLNDLRSHRDEKAVQEALEAITKCVETKEGNLLDLAVKAAGLRASLGEISDACEKVVGRYKAVIRTISGVYSSESGEDKDFAHAKELAEKFAKKEGRQPRIMIAKMGQDGHDRGAKVVATGYADCGFDVDMGPLFQTPEEAARQAVENDVHVMGVSSLAAGHKTLIPQVIAELEKLGRPDILVTAGGVIPAQDYDFLYQAGVAAIFGPGTPVAYSAAKVLEILLEE.

(R)-methylmalonyl-CoA contacts are provided by Tyr70, Met73, Arg77, Thr80, Arg82, Tyr84, and Ser109. Residues Phe112 and Ala134 each contribute to the cob(II)alamin site. (R)-methylmalonyl-CoA is bound by residues Thr190 and Gln192. Residues Val201 and Arg202 each contribute to the cob(II)alamin site. The (R)-methylmalonyl-CoA site is built by Arg202, His239, Arg278, and Ser280. Cob(II)alamin is bound by residues Gly328, Glu365, Ala368, Gly599, His600, Asp601, Arg602, Ser645, Leu647, Gly676, and Thr699. The 129-residue stretch at 587 to 715 folds into the B12-binding domain; that stretch reads QPRIMIAKMG…AKVLEILLEE (129 aa).

Belongs to the methylmalonyl-CoA mutase family. As to quaternary structure, heterodimer of an alpha and a beta chain. Adenosylcob(III)alamin is required as a cofactor.

It carries out the reaction (R)-methylmalonyl-CoA = succinyl-CoA. Its function is as follows. Catalyzes the isomerization of succinyl-CoA to methylmalonyl-CoA during synthesis of propionate from tricarboxylic acid-cycle intermediates. The sequence is that of Methylmalonyl-CoA mutase large subunit (mutB) from Porphyromonas gingivalis (strain ATCC BAA-308 / W83).